We begin with the raw amino-acid sequence, 370 residues long: Anhydro-N-acetylmuramic acid kinase (370 aa).

12–19 provides a ligand contact to ATP; the sequence is GTSLDGVD.

It belongs to the anhydro-N-acetylmuramic acid kinase family.

The catalysed reaction is 1,6-anhydro-N-acetyl-beta-muramate + ATP + H2O = N-acetyl-D-muramate 6-phosphate + ADP + H(+). It participates in amino-sugar metabolism; 1,6-anhydro-N-acetylmuramate degradation. It functions in the pathway cell wall biogenesis; peptidoglycan recycling. Its function is as follows. Catalyzes the specific phosphorylation of 1,6-anhydro-N-acetylmuramic acid (anhMurNAc) with the simultaneous cleavage of the 1,6-anhydro ring, generating MurNAc-6-P. Is required for the utilization of anhMurNAc either imported from the medium or derived from its own cell wall murein, and thus plays a role in cell wall recycling. The polypeptide is Anhydro-N-acetylmuramic acid kinase (Yersinia pseudotuberculosis serotype O:1b (strain IP 31758)).